A 666-amino-acid polypeptide reads, in one-letter code: Zinc finger protein 710 (666 aa).

Glycyl lysine isopeptide (Lys-Gly) (interchain with G-Cter in SUMO2) cross-links involve residues K110 and K113. The disordered stretch occupies residues 113–141 (KAEEEEEQEVYEVSVPGDDKDPGPAEAPA). C2H2-type zinc fingers lie at residues 297–319 (WQCRMCEKSYTSKYNLVTHILGH), 325–347 (HSCPHCSKLFKQPSHLQTHLLTH), and 353–375 (HKCQVCHKAFTQTSHLKRHMLLH). K379 participates in a covalent cross-link: Glycyl lysine isopeptide (Lys-Gly) (interchain with G-Cter in SUMO2). 8 consecutive C2H2-type zinc fingers follow at residues 381–403 (YSCHFCGRGFAYPSELKAHEVKH), 409–431 (HVCVECGLDFSTLTQLKRHLASH), 437–459 (YQCLECDKSFHYRSQLQNHMLKH), 465–487 (FVCTECGMEFSQIHHLKQHSLTH), 493–515 (FKCEVCGREFTLQANMKRHMLIH), 521–543 (YQCHICFKTFVQKQTLKTHMIVH), 549–571 (FKCKVCGKSFNRMYNLLGHMHLH), and 577–600 (FKCPYCSSKFNLKGNLSRHMKVKH).

It belongs to the krueppel C2H2-type zinc-finger protein family.

It localises to the nucleus. Functionally, may be involved in transcriptional regulation. The polypeptide is Zinc finger protein 710 (Znf710) (Mus musculus (Mouse)).